A 302-amino-acid chain; its full sequence is MIKVIERDGKVRLPFSRGILTRSITSVGVDVDLAYAIATEVQEELIRQGKKVVTKEEIRNITYQKLVEKGFKEEAKRYLFWRRFRKLKIPLIILLGGPTGVGKSTIATELAFRLGIRSVIGTDTIREVMRKIITPELLPTIHTSTFLAWKELRGTVTGSPIIAGFESQVNAVAVGVNAVIQRAIKEGLNAIIEGIHLVPGFIKIDYEMAFMYMIVARSREELEARFYERTRYSKRSAQYYISHLDEIMEIQEYLIKKAREYRVPIIENVELEKTISTIMEDIMEKTVEIMKKKGLDMLEEPK.

The 88-residue stretch at Ile-2 to Ile-89 folds into the ATP-cone domain.

Belongs to the 2-phosphoglycerate kinase family. A divalent metal cation is required as a cofactor.

The catalysed reaction is (2R)-2-phosphoglycerate + ATP = (2R)-2,3-bisphosphoglycerate + ADP + H(+). It participates in thermoadapter biosynthesis; cyclic 2,3-diphosphoglycerate biosynthesis; cyclic 2,3-diphosphoglycerate from 2-phospho-D-glycerate: step 1/2. Its function is as follows. Catalyzes the phosphorylation of 2-phosphoglycerate to 2,3-diphosphoglycerate. Involved in the biosynthesis of cyclic 2,3-bisphosphoglycerate, a thermoprotectant. The protein is 2-phosphoglycerate kinase of Pyrococcus furiosus (strain ATCC 43587 / DSM 3638 / JCM 8422 / Vc1).